A 248-amino-acid polypeptide reads, in one-letter code: Protein GrpE (248 aa).

The segment at 229–248 is disordered; it reads AAPKEDTLPAQENQSSPADS. Positions 238–248 are enriched in polar residues; sequence AQENQSSPADS.

The protein belongs to the GrpE family. In terms of assembly, homodimer.

Its subcellular location is the cytoplasm. Functionally, participates actively in the response to hyperosmotic and heat shock by preventing the aggregation of stress-denatured proteins, in association with DnaK and GrpE. It is the nucleotide exchange factor for DnaK and may function as a thermosensor. Unfolded proteins bind initially to DnaJ; upon interaction with the DnaJ-bound protein, DnaK hydrolyzes its bound ATP, resulting in the formation of a stable complex. GrpE releases ADP from DnaK; ATP binding to DnaK triggers the release of the substrate protein, thus completing the reaction cycle. Several rounds of ATP-dependent interactions between DnaJ, DnaK and GrpE are required for fully efficient folding. In Nostoc sp. (strain PCC 7120 / SAG 25.82 / UTEX 2576), this protein is Protein GrpE.